A 295-amino-acid chain; its full sequence is Histone deacetylase HDT1 (295 aa).

Residues 105–271 (SDFSDSSEED…TPNSAGQLSC (167 aa)) form a disordered region. The segment covering 109-118 (DSSEEDEELA) has biased composition (acidic residues). Over residues 123–135 (DNGKPELKAEGAK) the composition is skewed to basic and acidic residues. Positions 159–199 (EDDDSDDESDDDLAGEDESGSSDEMDDDSNSEEESDGDDEE) are enriched in acidic residues. The segment covering 200–213 (TPAKKVDQGKKRPN) has biased composition (basic and acidic residues). Residues 254–271 (TPNSTKGQTPNSAGQLSC) are compositionally biased toward polar residues. The segment at 269 to 292 (LSCASCKKSFTNEAGLQQHKKAKH) adopts a C2H2-type zinc-finger fold.

The protein belongs to the histone deacetylase HD2 family.

It is found in the nucleus. The protein localises to the nucleolus. Mediates the deacetylation of lysine residues on the N-terminal part of the core histones (H2A, H2B, H3 and H4). Histone deacetylation gives a tag for epigenetic repression and plays an important role in transcriptional regulation, cell cycle progression and developmental events. The sequence is that of Histone deacetylase HDT1 (HDT1) from Glycine max (Soybean).